The chain runs to 407 residues: Semenogelin-2 (407 aa).

The first 23 residues, 1–23 (MKSIILFVLSLVLILEKQAAVMG), serve as a signal peptide directing secretion. Disordered regions lie at residues 25–60 (KDGSKGQLPSGSSQFPHGQKGQHYFGQKDQQHTKSK), 133–158 (GQAHCGTQNPSQDQGNSPSGKGLSSQ), 173–192 (KEQASASGAQKGRTQGGSQS), and 272–407 (NLNQ…NKIS). Composition is skewed to polar residues over residues 31–40 (QLPSGSSQFP), 137–158 (CGTQNPSQDQGNSPSGKGLSSQ), and 174–192 (EQASASGAQKGRTQGGSQS). Over residues 292–310 (RTEERQLNHGEKSVQKDVS) the composition is skewed to basic and acidic residues. A compositionally biased stretch (polar residues) spans 325–334 (KSQNQVTIHS). Over residues 335–345 (QDQEHGHKENK) the composition is skewed to basic and acidic residues. The segment covering 372–397 (GSISIQTEEQIHGKSQNXVRIPSQAQ) has biased composition (polar residues).

This sequence belongs to the semenogelin family. In terms of assembly, interacts with SERPINA5.

It localises to the secreted. Functionally, participates in the formation of a gel matrix (sperm coagulum) entrapping the accessory gland secretions and ejaculated spermatozoa. This chain is Semenogelin-2 (SEMG2), found in Pan troglodytes (Chimpanzee).